The sequence spans 793 residues: Vacuolar transporter chaperone complex subunit 4 (793 aa).

Residues 1–684 (MPFSKAWRSA…MVKWAEQATR (684 aa)) lie on the Cytoplasmic side of the membrane. Positions 215, 286, 288, 312, 325, and 391 each coordinate ATP. Position 441 (Glu441) interacts with Mn(2+). Lys473 is an active-site residue. The segment at 575 to 595 (SVAPTMSPTDRPPSDEKKLTE) is disordered. The segment covering 586 to 595 (PPSDEKKLTE) has biased composition (basic and acidic residues). Residues 685-705 (VGVVGLAVIRFGNSMSLPNDM) traverse the membrane as a helical segment. Residues 706–717 (VAVHSFWRANFH) lie on the Vacuolar side of the membrane. The chain crosses the membrane as a helical span at residues 718–738 (IVLGSLMVVVAECVLVYAYVT). Over 739–760 (FKSRSRRVYARRKIRYDDRRGP) the chain is Cytoplasmic. The helical transmembrane segment at 761–781 (VALTFVILAVILITVMMHVMV) threads the bilayer. The Vacuolar segment spans residues 782 to 793 (RYGPMLTGSDTF).

This sequence belongs to the VTC4 family. In terms of assembly, the VTC core complex is an integral membrane heterooligomer composed of at least the catalytic subunit vtc4 and the accessory subunits vtc1 and vtc2. vtc1 is a small membrane protein without hydrophilic domain. Vtc2 and vtc4 are related and have 2 hydrophilic domains that face the cytosol, an N-terminal SPX domain and the central core domain. The central core in vtc4 is the catalytic domain. Requires Mn(2+) as cofactor.

It is found in the acidocalcisome membrane. The catalysed reaction is [phosphate](n) + ATP = [phosphate](n+1) + ADP. Its activity is regulated as follows. Activity of the enzyme is Mn(2+)-dependent and enhanced in the presence of pyrophosphate (PPi). Functionally, component of a polyphosphate synthase complex that utilizes ATP to synthesize and translocate polyphosphate to acidocalcisomes in epimastigotes, insect-stages of Trypanosoma brucei. Catalytic subunit of the vacuolar transporter chaperone (VTC) complex. The VTC complex acts as a vacuolar polyphosphate polymerase that catalyzes the synthesis of inorganic polyphosphate (polyP) via transfer of phosphate from ATP to a growing polyP chain, releasing ADP. VTC exposes its catalytic domain vtc4 to the cytosol, where the growing polyP chain winds through a tunnel-shaped pocket, integrating cytoplasmic polymer synthesis with polyP membrane translocation. The VTC complex carries 9 vacuolar transmembrane domains, which are likely to constitute the translocation channel into the organelle lumen. PolyP synthesis is tightly coupled to its transport into the vacuole lumen, in order to avoid otherwise toxic intermediates in the cytosol, and it depends on the proton gradient across the membrane, formed by V-ATPase. The VTC complex also plays a role in vacuolar membrane fusion. Essential for infection and parasite survival in the mammalian host. This chain is Vacuolar transporter chaperone complex subunit 4 (vtc4), found in Trypanosoma brucei brucei (strain 927/4 GUTat10.1).